The primary structure comprises 903 residues: Immunoglobulin superfamily member 22 (903 aa).

4 consecutive Ig-like domains span residues 67–158 (PEFV…LLVT), 232–322 (EAIR…AELT), 418–508 (PIKF…AIVT), and 606–696 (PSVL…LHLS). 2 consecutive Fibronectin type-III domains span residues 703–798 (FASQ…AKDP) and 804–898 (LVQD…MPPP).

The sequence is that of Immunoglobulin superfamily member 22 (IGSF22) from Homo sapiens (Human).